The following is a 294-amino-acid chain: Phosphoprotein (294 aa).

Residues 12-28 are binding to monomeric RNA-free nucleoprotein; sequence MGNEAAKAAEAFQRSLK. Positions 52–97 are disordered; it reads KPTISKSTKVTTPPERRNAWGEKPDTTRNQTEEARNEATLEDTSRL. Residues 65–97 show a composition bias toward basic and acidic residues; it reads PERRNAWGEKPDTTRNQTEEARNEATLEDTSRL. Ser106 bears the Phosphoserine mark. The tract at residues 123–128 is binding to host phosphatase PP1; it reads KKKVTF. Residues 135–157 form a binding to protein M2-1 region; sequence RYTKLEMEALELLSDNEDDDAES. 5 positions are modified to phosphoserine: Ser148, Ser157, Ser158, Ser168, and Ser171. The segment at 169-194 is oligomerization and binding to RNA-directed RNA polymerase L; it reads ALSLEARLESIDEKLSMILGLLRTLN. The disordered stretch occupies residues 234 to 294; the sequence is MKEEAKQKSK…PDDDLYSLTM (61 aa). The tract at residues 251-279 is binding to RNA-directed RNA polymerase L; it reads LTEKAKELNKIVEDESTSGESEEEEEEED. A compositionally biased stretch (basic and acidic residues) spans 253-263; sequence EKAKELNKIVE. The span at 264 to 294 shows a compositional bias: acidic residues; it reads DESTSGESEEEEEEEDEEESNPDDDLYSLTM. A binding to the N-RNA complex region spans residues 281–294; the sequence is EESNPDDDLYSLTM.

It belongs to the pneumoviridae phosphoprotein P family. In terms of assembly, homotetramer. Interacts with protein M2-1; the interaction between the two tetramers is required for the anti-termination and elongation transcriptional activities of protein M2-1. Interacts with host phosphatase PP1; this interaction recruits PP1 to the inclusion bodies. Formation of a complex PP1/M2-1/P allows P to target host PP1 phosphatase to the M2-1 substrate. Interacts with the nucleoprotein N; the phosphorylated phosphoprotein P binds to N-RNA complex. Interacts with the monomeric RNA-free nucleoprotein N. Interacts with RNA-directed RNA polymerase L (via N-terminus); the association of P and L forms the polymerase complex. In terms of processing, constitutively phosphorylated by host.

The protein resides in the virion. The protein localises to the host cytoplasm. Functionally, plays critical roles in regulating RNA replication and transcription through its interactions with multiple proteins. Tethers the RNA-directed RNA polymerase L to the nucleoprotein-RNA complex. Recruits the M2-1 protein, a processivity factor that is required for efficient transcription of viral RNA. Acts as a chaperone for neo-synthesized nucleoprotein by forming an N-P complex that preserves N in a monomeric and RNA-free state and prevents the association of nascent N with host cell RNAs. Recruits the host phosphatase PP1 to inclusion bodies to regulate viral transcription. In Avian metapneumovirus (isolate Canada goose/Minnesota/15a/2001) (AMPV), this protein is Phosphoprotein.